The following is a 329-amino-acid chain: MGLSKTIPLVLLPILMFGVLSNAQLTSDFYSTTCPNVTAIARGLIERASRNDVRLTAKVMRLHFHDCFVNGCDGSVLLDAAPADGVEGEKEAFQNAGSLDGFEVIDDIKTALENVCPGVVSCADILAIAAEISVALAGGPSLDVLLGRRDGRTAIRADAVAALPLGPDSLEILTSKFSVHNLDTTDLVALSGAHTFGRVQCGVINNRLHNFSGNSGQSDPSIEPEFLQTLRRQCPQGGDLTARANLDPTSPDSFDNDYFKNLQNNRGVIESDQILFSSTGAPTVSLVNRFAENQNEFFTNFARSMIKMGNVRILTGREGEIRRDCRRVN.

The signal sequence occupies residues 1-23 (MGLSKTIPLVLLPILMFGVLSNA). 4 cysteine pairs are disulfide-bonded: C34/C116, C67/C72, C122/C325, and C201/C234. An N-linked (GlcNAc...) asparagine glycan is attached at N36. H65 (proton acceptor) is an active-site residue. 5 residues coordinate Ca(2+): D66, V69, G71, D73, and S75. Substrate is bound at residue P164. H194 contributes to the heme b binding site. A Ca(2+)-binding site is contributed by T195. The N-linked (GlcNAc...) asparagine glycan is linked to N210. Positions 247, 250, and 255 each coordinate Ca(2+).

The protein belongs to the peroxidase family. Classical plant (class III) peroxidase subfamily. Heme b is required as a cofactor. Requires Ca(2+) as cofactor.

The protein resides in the secreted. It carries out the reaction 2 a phenolic donor + H2O2 = 2 a phenolic radical donor + 2 H2O. Removal of H(2)O(2), oxidation of toxic reductants, biosynthesis and degradation of lignin, suberization, auxin catabolism, response to environmental stresses such as wounding, pathogen attack and oxidative stress. These functions might be dependent on each isozyme/isoform in each plant tissue. This chain is Peroxidase 58 (PER58), found in Arabidopsis thaliana (Mouse-ear cress).